Reading from the N-terminus, the 342-residue chain is Olfactory receptor 51F2 (342 aa).

The Extracellular segment spans residues 1 to 39 (MTETSLSSQCFPMSVLNNTIAEPLIFLLMGIPGLKATQY). A glycan (N-linked (GlcNAc...) asparagine) is linked at N17. The chain crosses the membrane as a helical span at residues 40–60 (WISIPFCLLYVVAVSGNSMIL). Topologically, residues 61 to 68 (FVVLCERS) are cytoplasmic. Residues 69-89 (LHKPMYYFLSMLSATDLSLSL) traverse the membrane as a helical segment. Residues 90–113 (CTLSTTLGVFWFEAREINLNACIA) are Extracellular-facing. Cysteines 111 and 203 form a disulfide. The helical transmembrane segment at 114 to 134 (QMFFLHGFTFMESGVLLAMAF) threads the bilayer. The Cytoplasmic segment spans residues 135–153 (DRFVAICYPLRYTTILTNA). Residues 154–174 (RIAKIGMSMLIRNVAVMLPVM) form a helical membrane-spanning segment. Residues 175–210 (LFVKRLSFCSSMVLSHSYCYHVDLIQLSCTDNRINS) are Extracellular-facing. A helical membrane pass occupies residues 211 to 231 (ILGLFALLSTTGFDCPCILLS). Over 232–251 (YILIIRSVLSIASSEERRKA) the chain is Cytoplasmic. A helical membrane pass occupies residues 252–272 (FNTCTSHISAVSIFYLPLISL). The Extracellular segment spans residues 273–287 (SLVHRYGHSAPPFVH). The chain crosses the membrane as a helical span at residues 288–308 (IIMANVFLLIPPVLNPIIYSV). The Cytoplasmic portion of the chain corresponds to 309–342 (KIKQIQKAIIKVLIQKHSKSNHQLFLIRDKAIYE).

Belongs to the G-protein coupled receptor 1 family.

The protein localises to the cell membrane. Functionally, odorant receptor. This is Olfactory receptor 51F2 (OR51F2) from Homo sapiens (Human).